The sequence spans 458 residues: Oxysterol-binding protein-related protein 3B (458 aa).

Disordered stretches follow at residues 47–66 (VINP…RGRW), 370–401 (DMSK…AFTP), and 431–458 (RAAA…DLST). The segment covering 375–396 (GYEKSSMEERQRAEKRTREEKG) has biased composition (basic and acidic residues). The segment covering 443–458 (PKSIQFNPWQFQDLST) has biased composition (polar residues).

Belongs to the OSBP family. As to expression, expressed in roots, leaves, stems and flowers.

In terms of biological role, may be involved in the transport of sterols. This chain is Oxysterol-binding protein-related protein 3B (ORP3B), found in Arabidopsis thaliana (Mouse-ear cress).